The primary structure comprises 163 residues: Putative H/ACA ribonucleoprotein complex subunit 2-like protein (163 aa).

This sequence belongs to the eukaryotic ribosomal protein eL8 family. As to quaternary structure, component of the small nucleolar ribonucleoprotein particle containing H/ACA-type snoRNAs (H/ACA snoRNPs).

Its subcellular location is the nucleus. The protein resides in the nucleolus. In terms of biological role, required for ribosome biogenesis. Part of a complex which catalyzes pseudouridylation of rRNA. This involves the isomerization of uridine such that the ribose is subsequently attached to C5, instead of the normal N1. Pseudouridine ('psi') residues may serve to stabilize the conformation of rRNAs. This chain is Putative H/ACA ribonucleoprotein complex subunit 2-like protein, found in Caenorhabditis briggsae.